Here is a 499-residue protein sequence, read N- to C-terminus: UDP-N-acetylmuramoyl-L-alanyl-D-glutamate--2,6-diaminopimelate ligase (499 aa).

Positions 30 and 32 each coordinate UDP-N-acetyl-alpha-D-muramoyl-L-alanyl-D-glutamate. 122-128 (GTNGKTT) contacts ATP. Residues 164–165 (TT), S191, Q197, and R199 contribute to the UDP-N-acetyl-alpha-D-muramoyl-L-alanyl-D-glutamate site. K231 carries the N6-carboxylysine modification. Residues R397, 421 to 424 (DNPR), G472, and E476 each bind meso-2,6-diaminopimelate. The Meso-diaminopimelate recognition motif motif lies at 421-424 (DNPR).

This sequence belongs to the MurCDEF family. MurE subfamily. It depends on Mg(2+) as a cofactor. Post-translationally, carboxylation is probably crucial for Mg(2+) binding and, consequently, for the gamma-phosphate positioning of ATP.

It localises to the cytoplasm. The enzyme catalyses UDP-N-acetyl-alpha-D-muramoyl-L-alanyl-D-glutamate + meso-2,6-diaminopimelate + ATP = UDP-N-acetyl-alpha-D-muramoyl-L-alanyl-gamma-D-glutamyl-meso-2,6-diaminopimelate + ADP + phosphate + H(+). It participates in cell wall biogenesis; peptidoglycan biosynthesis. Functionally, catalyzes the addition of meso-diaminopimelic acid to the nucleotide precursor UDP-N-acetylmuramoyl-L-alanyl-D-glutamate (UMAG) in the biosynthesis of bacterial cell-wall peptidoglycan. In Blochmanniella floridana, this protein is UDP-N-acetylmuramoyl-L-alanyl-D-glutamate--2,6-diaminopimelate ligase.